A 450-amino-acid chain; its full sequence is Glucose-6-phosphate isomerase (450 aa).

Catalysis depends on glutamate 290, which acts as the Proton donor. Active-site residues include histidine 311 and lysine 425.

Belongs to the GPI family.

It is found in the cytoplasm. The enzyme catalyses alpha-D-glucose 6-phosphate = beta-D-fructose 6-phosphate. Its pathway is carbohydrate biosynthesis; gluconeogenesis. It participates in carbohydrate degradation; glycolysis; D-glyceraldehyde 3-phosphate and glycerone phosphate from D-glucose: step 2/4. In terms of biological role, catalyzes the reversible isomerization of glucose-6-phosphate to fructose-6-phosphate. The protein is Glucose-6-phosphate isomerase of Listeria monocytogenes serovar 1/2a (strain ATCC BAA-679 / EGD-e).